A 130-amino-acid polypeptide reads, in one-letter code: Anti-adapter protein IraD (130 aa).

This sequence belongs to the GpW/Gp25 family. IraD subfamily. In terms of assembly, interacts with RssB.

It is found in the cytoplasm. Inhibits RpoS proteolysis by regulating RssB activity, thereby increasing the stability of the sigma stress factor RpoS during oxidative stress. Its effect on RpoS stability is due to its interaction with RssB, which probably blocks the interaction of RssB with RpoS, and the consequent delivery of the RssB-RpoS complex to the ClpXP protein degradation pathway. The protein is Anti-adapter protein IraD of Escherichia coli O45:K1 (strain S88 / ExPEC).